Reading from the N-terminus, the 163-residue chain is Putative NOL1/NOP2/Sun domain family member 5B (163 aa).

The Nucleophile role is filled by cysteine 93.

It belongs to the class I-like SAM-binding methyltransferase superfamily. RsmB/NOP family. In terms of tissue distribution, ubiquitous.

The polypeptide is Putative NOL1/NOP2/Sun domain family member 5B (NSUN5P1) (Homo sapiens (Human)).